The following is an 867-amino-acid chain: Mitochondrial escape protein 2 (867 aa).

Residues 1 to 25 constitute a mitochondrion transit peptide; the sequence is MIIRTLRSQLRLPKPVYISPPCRYY. Over 26–279 the chain is Mitochondrial matrix; sequence STDLEKLKKE…LVSLISNHTK (254 aa). The RRM domain occupies 179–264; it reads GTPWIEDLRR…TTLHIQFVAI (86 aa). A helical transmembrane segment spans residues 280–300; the sequence is IAIPVLIALLATFAVLIFDPI. The Mitochondrial intermembrane segment spans residues 301-867; sequence REWFIEYKIL…DGKSFLGIKF (567 aa). The stretch at 795–852 forms a coiled coil; the sequence is IGRLISLEAAKIQKLEEELEKIYKIGKVDGRIDYVSQKIEASNKKILDLEKQAADVAS.

This sequence belongs to the YME2 family.

The protein resides in the mitochondrion inner membrane. Plays a role in maintaining the mitochondrial genome and in controlling the mtDNA escape. Involved in the regulation of mtDNA nucleotide structure and number. May have a dispensable role in early maturation of pre-rRNA. The polypeptide is Mitochondrial escape protein 2 (PRP13) (Candida albicans (strain SC5314 / ATCC MYA-2876) (Yeast)).